A 196-amino-acid chain; its full sequence is SPRY domain-containing protein 7 (196 aa).

The residue at position 2 (Ala2) is an N-acetylalanine. The B30.2/SPRY domain maps to 2–184 (AASVFCCLRC…FSEFYHTPPP (183 aa)).

In Bos taurus (Bovine), this protein is SPRY domain-containing protein 7 (SPRYD7).